Reading from the N-terminus, the 55-residue chain is ATP synthase small subunit 6-A, mitochondrial (55 aa).

The transit peptide at methionine 1–phenylalanine 11 directs the protein to the mitochondrion. Residues phenylalanine 21 to leucine 39 traverse the membrane as a helical segment.

Belongs to the ATPase 6 subunit family.

The protein resides in the mitochondrion inner membrane. Mitochondrial membrane ATP synthase (F(1)F(0) ATP synthase or Complex V) produces ATP from ADP in the presence of a proton gradient across the membrane which is generated by electron transport complexes of the respiratory chain. F-type ATPases consist of two structural domains, F(1) - containing the extramembraneous catalytic core and F(0) - containing the membrane proton channel, linked together by a central stalk and a peripheral stalk. During catalysis, ATP synthesis in the catalytic domain of F(1) is coupled via a rotary mechanism of the central stalk subunits to proton translocation. Part of the complex F(0) domain. Confers tolerance to several abiotic stresses (e.g. salt, mannitol, drought, oxidative and cold stresses), probably by providing additional energy needed for cell homeostasis. The polypeptide is ATP synthase small subunit 6-A, mitochondrial (Arabidopsis thaliana (Mouse-ear cress)).